A 238-amino-acid chain; its full sequence is Probable septum site-determining protein MinC (238 aa).

The protein belongs to the MinC family. Interacts with MinD and FtsZ.

Functionally, cell division inhibitor that blocks the formation of polar Z ring septums. Rapidly oscillates between the poles of the cell to destabilize FtsZ filaments that have formed before they mature into polar Z rings. Prevents FtsZ polymerization. The polypeptide is Probable septum site-determining protein MinC (Blochmanniella floridana).